The primary structure comprises 2357 residues: Protein transport protein Sec16A (2357 aa).

11 disordered regions span residues 1–225 (MQPP…SYQH), 240–347 (QAAS…AHHP), 394–463 (SFSS…GTGT), 504–562 (YGPL…ARPQ), 579–630 (DTSG…TSAN), 666–689 (KRRA…DNME), 714–739 (TAGT…GPVK), 778–820 (SEVV…PPKV), 917–1008 (VTGA…QEEA), 1023–1055 (PVRM…LHNQ), and 1076–1151 (QPEL…AAVR). Composition is skewed to polar residues over residues 57–75 (NRQT…SSLP) and 94–104 (TPTNAGDSSTG). Residues 208-221 (MPGQWGPAQGGPQP) show a composition bias toward low complexity. Residues 281 to 290 (VHQQSKNHPL) are compositionally biased toward polar residues. Serine 311 carries the phosphoserine modification. Over residues 333-342 (PFTQGNSPEN) the composition is skewed to polar residues. The segment covering 540–561 (PDSVSSSYSSHSHRSPPGSARP) has biased composition (low complexity). Phosphoserine occurs at positions 581, 591, 609, 611, and 614. Residues 581-590 (SGSFFKQIDS) show a composition bias toward polar residues. A Phosphothreonine modification is found at threonine 615. Serine 617 bears the Phosphoserine mark. 3 stretches are compositionally biased toward polar residues: residues 921–959 (SLPS…QTPQ), 972–997 (FVSS…PNSN), and 1029–1041 (PSPS…QQPL). Positions 1037–1905 (SQQPLPNHPR…QHVERQIQEG (869 aa)) are required for localization to endoplasmic reticulum exit sites. At serine 1087 the chain carries Phosphoserine. Residues 1118 to 1415 (ASPASVNTGQ…EAPHAPGSFH (298 aa)) are interaction with MIA3. Residues 1119–1420 (SPASVNTGQL…PGSFHGDYAY (302 aa)) form a required for endoplasmic reticulum localization region. The segment covering 1134–1150 (QASSASVTSTNSSQAAV) has biased composition (low complexity). A Phosphoserine modification is found at serine 1223. The disordered stretch occupies residues 1226–1253 (AENHRYSEPERPSSRASHYSDQLAPRQG). A compositionally biased stretch (basic and acidic residues) spans 1227–1238 (ENHRYSEPERPS). Position 1245 is a phosphoserine (serine 1245). Threonine 1340 is modified (phosphothreonine). Phosphoserine is present on residues serine 1342, serine 1362, serine 1365, serine 1371, serine 1374, serine 1377, serine 1384, serine 1588, and serine 1616. The segment at 1344–1395 (DDDAEIHRDPYGEEADRRSIHSEHSARSLRSTHSLPSRRSSLSSHSHQSQIY) is disordered. A compositionally biased stretch (basic and acidic residues) spans 1348–1369 (EIHRDPYGEEADRRSIHSEHSA). Residues 1371–1392 (SLRSTHSLPSRRSSLSSHSHQS) show a composition bias toward low complexity. The interval 1449 to 1905 (QVPSRPTSPE…QHVERQIQEG (457 aa)) is central conserved domain (CCD); mediates interaction with RNF183, LRRK2 and SEC13. Residues 1907–1943 (VLWSQDGTEPQQCRITSGSEVEQSDGPGLNQQAGPQA) form a disordered region. Polar residues predominate over residues 1908–1927 (LWSQDGTEPQQCRITSGSEV). Threonine 1922 is subject to Phosphothreonine. A phosphoserine mark is found at serine 1951, serine 2043, serine 2063, serine 2077, and serine 2094. 3 disordered regions span residues 1993–2141 (ELSP…RTEA), 2156–2198 (KKNQ…PTAS), and 2240–2357 (PLPI…AALN). Residues 2092–2105 (GSSSLTRAPSLTSD) show a composition bias toward polar residues. Residues 2106–2126 (SEGKKPAQAVKKEPKEPKKTE) are compositionally biased toward basic and acidic residues. The tract at residues 2126 to 2357 (ESWFSRWLPG…IGQRKYAALN (232 aa)) is required for interaction with SEC23A. Serine 2291 carries the post-translational modification Phosphoserine. A compositionally biased stretch (polar residues) spans 2332–2343 (QLVQASVTSGNS).

This sequence belongs to the SEC16 family. In terms of assembly, SEC16A and SEC16B are each present in multiple copies in a heteromeric complex. Interacts with SEC23A. Interacts with RNF183, RNF152, MIA3 and SEC13. Interacts with GORASP2 in response to ER stress. Interacts with LRRK2 (via ROC domain). Interacts with RAB10.

It is found in the endoplasmic reticulum membrane. It localises to the golgi apparatus membrane. The protein resides in the cytoplasm. Its subcellular location is the perinuclear region. The protein localises to the cytosol. It is found in the microsome membrane. Functionally, acts as a molecular scaffold that plays a key role in the organization of the endoplasmic reticulum exit sites (ERES), also known as transitional endoplasmic reticulum (tER). SAR1A-GTP-dependent assembly of SEC16A on the ER membrane forms an organized scaffold defining an ERES. Required for secretory cargo traffic from the endoplasmic reticulum to the Golgi apparatus. Mediates the recruitment of MIA3/TANGO to ERES. Regulates both conventional (ER/Golgi-dependent) and GORASP2-mediated unconventional (ER/Golgi-independent) trafficking of CFTR to cell membrane. Acts as a RAB10 effector in the regulation of insulin-induced SLC2A4/GLUT4 glucose transporter-enriched vesicles delivery to the plasma membrane in adipocytes. This is Protein transport protein Sec16A (Sec16a) from Mus musculus (Mouse).